A 205-amino-acid polypeptide reads, in one-letter code: Recombination protein RecR (205 aa).

The segment at 58–75 (CSVCQNVTDRDADPCYIC) adopts a C4-type zinc-finger fold. The Toprim domain maps to 83–182 (SVICVVESPA…SVTKIARGIP (100 aa)).

The protein belongs to the RecR family.

Its function is as follows. May play a role in DNA repair. It seems to be involved in an RecBC-independent recombinational process of DNA repair. It may act with RecF and RecO. The sequence is that of Recombination protein RecR from Chlorobium limicola (strain DSM 245 / NBRC 103803 / 6330).